The following is a 124-amino-acid chain: Ribonuclease pancreatic (124 aa).

Positions 1–13 are enriched in basic and acidic residues; the sequence is KESAAAKFERQHM. Positions 1–24 are disordered; the sequence is KESAAAKFERQHMDPSMSSASSSN. Substrate contacts are provided by Lys-7 and Arg-10. His-12 serves as the catalytic Proton acceptor. Disulfide bonds link Cys-26–Cys-84, Cys-40–Cys-95, Cys-58–Cys-110, and Cys-65–Cys-72. Substrate-binding positions include 41 to 45, Lys-66, and Arg-85; that span reads KPVNT. His-119 acts as the Proton donor in catalysis.

The protein belongs to the pancreatic ribonuclease family. As to quaternary structure, monomer. Interacts with and forms tight 1:1 complexes with RNH1. Dimerization of two such complexes may occur. Interaction with RNH1 inhibits this protein. As to expression, pancreas.

The protein resides in the secreted. It carries out the reaction an [RNA] containing cytidine + H2O = an [RNA]-3'-cytidine-3'-phosphate + a 5'-hydroxy-ribonucleotide-3'-[RNA].. The catalysed reaction is an [RNA] containing uridine + H2O = an [RNA]-3'-uridine-3'-phosphate + a 5'-hydroxy-ribonucleotide-3'-[RNA].. In terms of biological role, endonuclease that catalyzes the cleavage of RNA on the 3' side of pyrimidine nucleotides. Acts on single-stranded and double-stranded RNA. In Dama dama (Fallow deer), this protein is Ribonuclease pancreatic (RNASE1).